A 156-amino-acid chain; its full sequence is Small ribosomal subunit protein uS7 (156 aa).

This sequence belongs to the universal ribosomal protein uS7 family. In terms of assembly, part of the 30S ribosomal subunit. Contacts proteins S9 and S11.

One of the primary rRNA binding proteins, it binds directly to 16S rRNA where it nucleates assembly of the head domain of the 30S subunit. Is located at the subunit interface close to the decoding center, probably blocks exit of the E-site tRNA. In Maridesulfovibrio salexigens (strain ATCC 14822 / DSM 2638 / NCIMB 8403 / VKM B-1763) (Desulfovibrio salexigens), this protein is Small ribosomal subunit protein uS7.